The sequence spans 192 residues: Erythropoietin (192 aa).

An N-terminal signal peptide occupies residues methionine 1 to glycine 25. 2 cysteine pairs are disulfide-bonded: cysteine 32–cysteine 187 and cysteine 54–cysteine 58. Asparagine 49 is a glycosylation site (N-linked (GlcNAc...) asparagine). N-linked (GlcNAc...) asparagine glycans are attached at residues asparagine 63 and asparagine 108.

This sequence belongs to the EPO/TPO family. In terms of tissue distribution, produced by kidney or liver of adult mammals and by liver of fetal or neonatal mammals.

It localises to the secreted. In terms of biological role, hormone involved in the regulation of erythrocyte proliferation and differentiation and the maintenance of a physiological level of circulating erythrocyte mass. Binds to EPOR leading to EPOR dimerization and JAK2 activation thereby activating specific downstream effectors, including STAT1 and STAT3. The chain is Erythropoietin (EPO) from Bos taurus (Bovine).